The chain runs to 313 residues: Cadmium, cobalt and zinc/H(+)-K(+) antiporter (313 aa).

Residues Met1–Lys14 lie on the Extracellular side of the membrane. A helical membrane pass occupies residues Val15–Phe35. Topologically, residues Leu36 to Asp45 are cytoplasmic. Residues Ala46–Ala66 form a helical membrane-spanning segment. Residues Glu67 to Arg80 are Extracellular-facing. A helical transmembrane segment spans residues Phe81–Ile101. At Tyr102–Thr117 the chain is on the cytoplasmic side. The chain crosses the membrane as a helical span at residues Gly118 to Leu138. Residues Asn139–Asp159 lie on the Extracellular side of the membrane. The helical transmembrane segment at Met160 to Trp180 threads the bilayer. The Cytoplasmic portion of the chain corresponds to Ala181–His313.

It belongs to the cation diffusion facilitator (CDF) transporter (TC 2.A.4) family. SLC30A subfamily.

The protein localises to the cell membrane. Involved in divalent cation and potassium homeostasis in the cell. Catalyzes the active efflux of zinc, cadmium and cobalt, in exchange for potassium and H(+) ions. This Bacillus velezensis (strain DSM 23117 / BGSC 10A6 / LMG 26770 / FZB42) (Bacillus amyloliquefaciens subsp. plantarum) protein is Cadmium, cobalt and zinc/H(+)-K(+) antiporter (czcD).